The primary structure comprises 71 residues: UPF0346 protein BCQ_2236 (71 aa).

It belongs to the UPF0346 family.

This is UPF0346 protein BCQ_2236 from Bacillus cereus (strain Q1).